Reading from the N-terminus, the 227-residue chain is MSEKAILSCRDLGKSYEEGPESVVVLSGLQLELHPGERVAIVGTSGSGKSTLLNLLGGLDTPSKGSVWLAGEELSALGEKARGKLRNRALGFVYQFHHLLPEFTALENVCMPLLIGRTPIPEARQRATALLERVGLGHRLEHKPAELSGGERQRVAIARALVNKPGLVMLDEPTGNLDSHTAQGIQDLMLELSTSMRTAFLVVTHDMNLARQMDRVLHLQEGHLVAI.

Positions 7-227 constitute an ABC transporter domain; the sequence is LSCRDLGKSY…HLQEGHLVAI (221 aa). Residue 43–50 participates in ATP binding; sequence GTSGSGKS.

This sequence belongs to the ABC transporter superfamily. Lipoprotein translocase (TC 3.A.1.125) family. The complex is composed of two ATP-binding proteins (LolD) and two transmembrane proteins (LolC and LolE).

Its subcellular location is the cell inner membrane. In terms of biological role, part of the ABC transporter complex LolCDE involved in the translocation of mature outer membrane-directed lipoproteins, from the inner membrane to the periplasmic chaperone, LolA. Responsible for the formation of the LolA-lipoprotein complex in an ATP-dependent manner. The chain is Lipoprotein-releasing system ATP-binding protein LolD from Pseudomonas fluorescens (strain ATCC BAA-477 / NRRL B-23932 / Pf-5).